A 335-amino-acid chain; its full sequence is Protein STRICTOSIDINE SYNTHASE-LIKE 12 (335 aa).

Residues 1 to 22 (MTSFCSMISLLLLLSLSSAVFS) form the signal peptide. Asparagine 80 is a glycosylation site (N-linked (GlcNAc...) asparagine).

It belongs to the strictosidine synthase family.

It is found in the vacuole. The enzyme catalyses 3alpha(S)-strictosidine + H2O = secologanin + tryptamine. The protein operates within alkaloid biosynthesis; 3alpha(S)-strictosidine biosynthesis; 3alpha(S)-strictosidine from secologanin and tryptamine: step 1/1. Functionally, catalyzes the stereospecific condensation of tryptamine with secologanin to form strictosidine, the key intermediate of indole alkaloid biosynthesis. The polypeptide is Protein STRICTOSIDINE SYNTHASE-LIKE 12 (Arabidopsis thaliana (Mouse-ear cress)).